Here is a 985-residue protein sequence, read N- to C-terminus: DNA polymerase (985 aa).

The tract at residues 936 to 972 (APSASDASGKRARKGAAPSDDESGSSEDEDAPCEPKC) is disordered. The segment covering 954-967 (SDDESGSSEDEDAP) has biased composition (acidic residues).

The protein belongs to the DNA polymerase type-B family.

It catalyses the reaction DNA(n) + a 2'-deoxyribonucleoside 5'-triphosphate = DNA(n+1) + diphosphate. Its function is as follows. Replicates the viral genome, host DNA polymerases cannot substitute for the viral enzyme in this process. The chain is DNA polymerase (POL) from Orgyia pseudotsugata (Douglas-fir tussock moth).